Reading from the N-terminus, the 224-residue chain is Redox-sensing transcriptional repressor Rex (224 aa).

The H-T-H motif DNA-binding region spans Arg-17–Phe-56. Residue Gly-91 to Gly-96 participates in NAD(+) binding.

The protein belongs to the transcriptional regulatory Rex family. Homodimer.

The protein resides in the cytoplasm. Its function is as follows. Modulates transcription in response to changes in cellular NADH/NAD(+) redox state. The protein is Redox-sensing transcriptional repressor Rex of Thermoanaerobacter sp. (strain X514).